An 872-amino-acid chain; its full sequence is Probably inactive leucine-rich repeat receptor-like protein kinase At5g06940 (872 aa).

The signal sequence occupies residues 1–26 (MATRFKHQFSISLALTFFFFFTKTFS). The Extracellular segment spans residues 27–540 (FTENEELGNL…RSNFHKKGGK (514 aa)). N-linked (GlcNAc...) asparagine glycans are attached at residues Asn-55, Asn-63, and Asn-86. LRR repeat units lie at residues 79–98 (SINL…ICDL), 99–122 (PYLT…LSRC), 123–146 (VTLE…ISEF), 147–169 (SSLK…DLGL), 171–193 (FNLQ…AIGK), 195–217 (SELV…SFLG), 219–243 (LDKL…FVGL), 244–267 (TSLR…LGPS), 269–292 (KNLV…ICSG), 294–316 (RLIN…IGEC), 317–340 (LSLE…LWKL), 341–365 (PRIK…SLAS), 367–389 (LEQV…GLVK), 391–412 (LYKF…FCDS), 413–435 (PVLS…LKNC), 436–459 (KKLV…LADL), 460–482 (HVLT…GLQN), and 484–506 (KLAL…LVSG). Asn-129 carries N-linked (GlcNAc...) asparagine glycosylation. A glycan (N-linked (GlcNAc...) asparagine) is linked at Asn-255. The N-linked (GlcNAc...) asparagine glycan is linked to Asn-297. Asn-374 carries N-linked (GlcNAc...) asparagine glycosylation. A glycan (N-linked (GlcNAc...) asparagine) is linked at Asn-419. N-linked (GlcNAc...) asparagine glycosylation occurs at Asn-489. Residues 541 to 561 (ALVLSLICLALAIATFLAVLY) traverse the membrane as a helical segment. Residues 562–872 (RYSRKKVQFK…ISSSVSPVSA (311 aa)) are Cytoplasmic-facing. Phosphothreonine is present on Thr-585. The Protein kinase domain occupies 589 to 863 (LMKVVNESCP…VKVIKLLEGI (275 aa)). ATP contacts are provided by residues 595–603 (ESCPSGSEV) and Lys-617. Tyr-662, Tyr-699, Tyr-754, and Tyr-761 each carry phosphotyrosine.

This sequence belongs to the protein kinase superfamily. Ser/Thr protein kinase family.

Its subcellular location is the membrane. The polypeptide is Probably inactive leucine-rich repeat receptor-like protein kinase At5g06940 (Arabidopsis thaliana (Mouse-ear cress)).